A 227-amino-acid polypeptide reads, in one-letter code: Mitochondrial inner membrane protease ATP23 (227 aa).

A divalent metal cation is bound at residue histidine 129. Glutamate 130 is an active-site residue. Histidine 133 contributes to the a divalent metal cation binding site.

It belongs to the peptidase M76 family.

Its subcellular location is the mitochondrion inner membrane. Has a dual role in the assembly of mitochondrial ATPase. Acts as a protease that removes N-terminal residues of mitochondrial ATPase CF(0) subunit 6 at the intermembrane space side. Also involved in the correct assembly of the membrane-embedded ATPase CF(0) particle, probably mediating association of subunit 6 with the subunit 9 ring. The polypeptide is Mitochondrial inner membrane protease ATP23 (ATP23) (Cryptococcus neoformans var. neoformans serotype D (strain B-3501A) (Filobasidiella neoformans)).